We begin with the raw amino-acid sequence, 162 residues long: Fibroblast growth factor 22 (162 aa).

Residues 1–22 (MRSRLWLGLAWLLLARAPGAPG) form the signal peptide.

It belongs to the heparin-binding growth factors family. In terms of assembly, interacts with FGFR1 and FGFR2. Interacts with FGFBP1. As to expression, preferentially expressed in skin; low expression in brain. Expressed in the inner root sheath of the hair follicle.

Its subcellular location is the secreted. Functionally, plays a role in the fasting response, glucose homeostasis, lipolysis and lipogenesis. Can stimulate cell proliferation (in vitro). May be involved in hair development. The polypeptide is Fibroblast growth factor 22 (Fgf22) (Mus musculus (Mouse)).